A 142-amino-acid polypeptide reads, in one-letter code: Large ribosomal subunit protein uL16 (142 aa).

This sequence belongs to the universal ribosomal protein uL16 family. Part of the 50S ribosomal subunit.

Binds 23S rRNA and is also seen to make contacts with the A and possibly P site tRNAs. This is Large ribosomal subunit protein uL16 from Thermotoga neapolitana (strain ATCC 49049 / DSM 4359 / NBRC 107923 / NS-E).